The following is a 234-amino-acid chain: (5-formylfuran-3-yl)methyl phosphate synthase (234 aa).

K27 serves as the catalytic Schiff-base intermediate with substrate. The active-site Proton acceptor is K85.

The protein belongs to the MfnB family.

The enzyme catalyses 2 D-glyceraldehyde 3-phosphate = 4-(hydroxymethyl)-2-furancarboxaldehyde phosphate + phosphate + 2 H2O. It functions in the pathway cofactor biosynthesis; methanofuran biosynthesis. Its function is as follows. Catalyzes the formation of 4-(hydroxymethyl)-2-furancarboxaldehyde phosphate (4-HFC-P) from two molecules of glyceraldehyde-3-P (GA-3-P). The protein is (5-formylfuran-3-yl)methyl phosphate synthase of Methanosarcina acetivorans (strain ATCC 35395 / DSM 2834 / JCM 12185 / C2A).